Reading from the N-terminus, the 183-residue chain is BLOC-1-related complex subunit 8 homolog (183 aa).

The disordered stretch occupies residues 152-183; sequence MIGPGTATGRTEAQAATSSNPGELQRSYTTLH. The span at 159 to 183 shows a compositional bias: polar residues; that stretch reads TGRTEAQAATSSNPGELQRSYTTLH.

This sequence belongs to the BORCS8 family.

The protein resides in the lysosome membrane. In terms of biological role, may participate in the coupling of lysosomes to microtubule plus-end-directed kinesin motor. The chain is BLOC-1-related complex subunit 8 homolog from Drosophila melanogaster (Fruit fly).